Here is a 284-residue protein sequence, read N- to C-terminus: Shikimate dehydrogenase (NADP(+)) (284 aa).

Shikimate contacts are provided by residues S20 to S22 and S67. Residue K71 is the Proton acceptor of the active site. Residue D83 coordinates NADP(+). Shikimate contacts are provided by N92 and D107. Residues G129–A133 and I227 contribute to the NADP(+) site. Y229 serves as a coordination point for shikimate. G250 is a binding site for NADP(+).

This sequence belongs to the shikimate dehydrogenase family. Homodimer.

It carries out the reaction shikimate + NADP(+) = 3-dehydroshikimate + NADPH + H(+). Its pathway is metabolic intermediate biosynthesis; chorismate biosynthesis; chorismate from D-erythrose 4-phosphate and phosphoenolpyruvate: step 4/7. Functionally, involved in the biosynthesis of the chorismate, which leads to the biosynthesis of aromatic amino acids. Catalyzes the reversible NADPH linked reduction of 3-dehydroshikimate (DHSA) to yield shikimate (SA). In Streptococcus pneumoniae (strain Taiwan19F-14), this protein is Shikimate dehydrogenase (NADP(+)).